Consider the following 203-residue polypeptide: FMN-dependent NADH:quinone oxidoreductase (203 aa).

143 to 146 contacts FMN; sequence SNGG.

The protein belongs to the azoreductase type 1 family. As to quaternary structure, homodimer. The cofactor is FMN.

The enzyme catalyses 2 a quinone + NADH + H(+) = 2 a 1,4-benzosemiquinone + NAD(+). The catalysed reaction is N,N-dimethyl-1,4-phenylenediamine + anthranilate + 2 NAD(+) = 2-(4-dimethylaminophenyl)diazenylbenzoate + 2 NADH + 2 H(+). Quinone reductase that provides resistance to thiol-specific stress caused by electrophilic quinones. Functionally, also exhibits azoreductase activity. Catalyzes the reductive cleavage of the azo bond in aromatic azo compounds to the corresponding amines. This Streptococcus suis (strain 98HAH33) protein is FMN-dependent NADH:quinone oxidoreductase.